Consider the following 947-residue polypeptide: ATP-dependent RNA helicase DDX42 (947 aa).

The span at 1–18 (MNWNKGGSGNKRGFGFGG) shows a compositional bias: gly residues. Disordered stretches follow at residues 1 to 54 (MNWN…NQLP), 68 to 114 (EENS…PLEA), and 176 to 200 (NLEY…LPPI). Positions 34–54 (VSHSAFQSASSKYGSTSNQLP) are enriched in polar residues. The segment covering 68–81 (EENSYFDDEEEDSS) has biased composition (acidic residues). Residues 112 to 152 (LEAFMAEVEDQAAKDMRKLEERDKEKANARGIRDDIEEEDD) are a coiled coil. Residues 250-278 (SSFAHFGFDEQLLHQIRKSEYTQPTPIQC) carry the Q motif motif. A Helicase ATP-binding domain is found at 281–456 (IPVALSGRDM…RDILVDPIRV (176 aa)). ATP is bound at residue 294–301 (AKTGSGKT). Residues 404–407 (DEAD) carry the DEAD box motif. Residues 484–629 (WLTRRLVEFT…YVSKELLDLA (146 aa)) form the Helicase C-terminal domain. Disordered regions lie at residues 731 to 754 (SAGS…EAAP) and 797 to 947 (GASA…RWDS). A compositionally biased stretch (basic and acidic residues) spans 805-929 (GGRERHSDSK…RKEGTREAKT (125 aa)). Residues 938 to 947 (PKRKKSRWDS) show a composition bias toward basic residues.

This sequence belongs to the DEAD box helicase family. DDX42 subfamily. As to quaternary structure, transient component of the SF3B subcomplex of the 17S U2 SnRNP complex.

The protein localises to the cytoplasm. The protein resides in the nucleus. The catalysed reaction is ATP + H2O = ADP + phosphate + H(+). ATP-dependent RNA helicase that binds to partially double-stranded RNAs (dsRNAs) in order to unwind RNA secondary structures. Unwinding is promoted in the presence of single-strand binding proteins. Also mediates RNA duplex formation thereby displacing the single-strand RNA binding protein. ATP and ADP modulate its activity: ATP binding and hydrolysis by DDX42 triggers RNA strand separation, whereas the ADP-bound form of the protein triggers annealing of complementary RNA strands. Required for assembly of the 17S U2 SnRNP complex of the spliceosome, a large ribonucleoprotein complex that removes introns from transcribed pre-mRNAs: DDX42 associates transiently with the SF3B subcomplex of the 17S U2 SnRNP complex and is released after fulfilling its role in the assembly of 17S U2 SnRNP. This Xenopus laevis (African clawed frog) protein is ATP-dependent RNA helicase DDX42 (ddx42).